A 377-amino-acid chain; its full sequence is Glycine oxidase (377 aa).

Residues valine 14–isoleucine 15, glutamate 34–lysine 35, alanine 42–serine 43, alanine 47–methionine 49, and valine 180 contribute to the FAD site. Residues arginine 309 and arginine 336 each contribute to the substrate site. An FAD-binding site is contributed by histidine 334–leucine 340.

This sequence belongs to the DAO family. ThiO subfamily. In terms of assembly, homotetramer. FAD is required as a cofactor.

It carries out the reaction glycine + O2 + H2O = glyoxylate + H2O2 + NH4(+). The enzyme catalyses N-ethylglycine + O2 + H2O = ethylamine + glyoxylate + H2O2. The catalysed reaction is sarcosine + O2 + H2O = methylamine + glyoxylate + H2O2. It catalyses the reaction D-alanine + O2 + H2O = pyruvate + H2O2 + NH4(+). The protein operates within cofactor biosynthesis; thiamine diphosphate biosynthesis. Its activity is regulated as follows. Is inhibited at high substrate concentration. In terms of biological role, catalyzes the FAD-dependent oxidative deamination of various amines and D-amino acids to yield the corresponding alpha-keto acids, ammonia/amine, and hydrogen peroxide. Oxidizes glycine, sarcosine (N-methylglycine), N-ethylglycine, D-proline, D-alanine, glycine-ethyl ester, and some other D-amino acids. Does not act on L-proline. Is essential for thiamine biosynthesis since the oxidation of glycine catalyzed by ThiO generates the glycine imine intermediate (dehydroglycine) required for the biosynthesis of the thiazole ring of thiamine pyrophosphate. This Geobacillus kaustophilus (strain HTA426) protein is Glycine oxidase.